Consider the following 146-residue polypeptide: Ribonuclease P protein component (146 aa).

The protein belongs to the RnpA family. In terms of assembly, consists of a catalytic RNA component (M1 or rnpB) and a protein subunit.

The enzyme catalyses Endonucleolytic cleavage of RNA, removing 5'-extranucleotides from tRNA precursor.. Its function is as follows. RNaseP catalyzes the removal of the 5'-leader sequence from pre-tRNA to produce the mature 5'-terminus. It can also cleave other RNA substrates such as 4.5S RNA. The protein component plays an auxiliary but essential role in vivo by binding to the 5'-leader sequence and broadening the substrate specificity of the ribozyme. This Chlorobium phaeobacteroides (strain DSM 266 / SMG 266 / 2430) protein is Ribonuclease P protein component.